We begin with the raw amino-acid sequence, 132 residues long: Ribosome-binding factor A (132 aa).

Belongs to the RbfA family. In terms of assembly, monomer. Binds 30S ribosomal subunits, but not 50S ribosomal subunits or 70S ribosomes.

It is found in the cytoplasm. In terms of biological role, one of several proteins that assist in the late maturation steps of the functional core of the 30S ribosomal subunit. Associates with free 30S ribosomal subunits (but not with 30S subunits that are part of 70S ribosomes or polysomes). Required for efficient processing of 16S rRNA. May interact with the 5'-terminal helix region of 16S rRNA. The sequence is that of Ribosome-binding factor A from Pseudomonas putida (strain ATCC 700007 / DSM 6899 / JCM 31910 / BCRC 17059 / LMG 24140 / F1).